The primary structure comprises 212 residues: Probable nicotinate-nucleotide adenylyltransferase (212 aa).

Belongs to the NadD family.

The catalysed reaction is nicotinate beta-D-ribonucleotide + ATP + H(+) = deamido-NAD(+) + diphosphate. The protein operates within cofactor biosynthesis; NAD(+) biosynthesis; deamido-NAD(+) from nicotinate D-ribonucleotide: step 1/1. Catalyzes the reversible adenylation of nicotinate mononucleotide (NaMN) to nicotinic acid adenine dinucleotide (NaAD). The sequence is that of Probable nicotinate-nucleotide adenylyltransferase from Shewanella sp. (strain MR-4).